Here is a 66-residue protein sequence, read N- to C-terminus: Beta-toxin Cbo4 (66 aa).

In terms of domain architecture, LCN-type CS-alpha/beta spans 1 to 66; that stretch reads KEGYIVDYHT…VWPLPNKRCK (66 aa). Disulfide bonds link cysteine 12–cysteine 65, cysteine 16–cysteine 41, cysteine 25–cysteine 46, and cysteine 29–cysteine 48. The residue at position 66 (lysine 66) is a Lysine amide.

Belongs to the long (4 C-C) scorpion toxin superfamily. Sodium channel inhibitor family. Beta subfamily. In terms of tissue distribution, expressed by the venom gland.

The protein localises to the secreted. In terms of biological role, beta toxins bind voltage-independently at site-4 of sodium channels and shift the voltage of activation toward more negative potentials thereby affecting sodium channel activation and promoting spontaneous and repetitive firing. Is active on the human voltage-gated sodium channels Nav1.4/SCN4A, Nav1.5/SCN5A and Nav1.6/SCN8A when tested at 200 nM. In vivo, is toxic to mice when intraperitoneally injected. The sequence is that of Beta-toxin Cbo4 from Centruroides bonito (Scorpion).